A 753-amino-acid chain; its full sequence is MAPDSDPFPEGPLLKLLPLDARDRGTQRCRLGPAALHALGARLGSAVKISLPDGGSCLCTAWPRRDGADGFVQLDPLCASPGAAVGASRSRRSLSLNRLLLVPCPPLRRVAVWPVLRERAGAPGARNTAAVLEAAQELLRNRPISLGHVVVAPPGAPGLVAALHIVGGTPSPDPAGLVTPRTRVSLGGEPPSEAQPQPEVPLGGLSEAADSLRELLRLPLRYPRALTALGLAVPRGVLLAGPPGVGKTQLVRAVAREAGAELLAVSAPALQGSRPGETEENVRRVFQRARELASRGPSLLFLDEMDALCPQRGSRAPESRVVAQVLTLLDGASGDREVVVVGATNRPDALDPALRRPGRFDREVVIGTPTLKQRKEILQVITSKMPISSHVDLGLLAEMTVGYVGADLTALCREAAMHALLHSEKNQDNPVIDEIDFLEAFKNIQPSSFRSVIGLMDIKPVDWEEIGGLEDVKLKLKQSIEWPLKFPWEFVRMGLTQPKGVLLYGPPGCAKTTLVRALATSCHCSFVSVSGADLFSPFVGDSEKVLSQIFRQARASTPAILFLDEIDSILGARSASKTGCDVQERVLSVLLNELDGVGLKTIERRGSKSSQQEFQEVFNRSVMIIAATNRPDVLDTALLRPGRLDKIIYIPPPDHKGRLSILKVCTKTMPIGPDVSLENLAAETCFFSGADLRNLCTEAALLALQENGLDATTVKQEHFLKSLKTVKPSLSCKDLALYENLFKKEGFSNVEGI.

Residue methionine 1 is modified to N-acetylmethionine. Positions 1 to 189 are required for interaction with AFG2A and CINP; the sequence is MAPDSDPFPE…PRTRVSLGGE (189 aa). Residues 171–203 are disordered; that stretch reads SPDPAGLVTPRTRVSLGGEPPSEAQPQPEVPLG. ATP contacts are provided by residues 241-248 and 505-512; these read GPPGVGKT and GPPGCAKT.

Belongs to the AAA ATPase family. AFG2 subfamily. In terms of assembly, part of the 55LCC heterohexameric ATPase complex composed at least of AIRIM, AFG2A, AFG2B and CINP. Associates with pre-60S ribosomal particles. Expressed in both neurons and glia during embryonic and adult stages of brain development.

It localises to the cytoplasm. Its subcellular location is the cytoskeleton. The protein localises to the spindle. The protein resides in the nucleus. It carries out the reaction ATP + H2O = ADP + phosphate + H(+). Its activity is regulated as follows. In the context of 55LCC heterohexameric ATPase complex, the ATPase activity is stimulated by DNA binding and inhibited in presence of RNA. ATP-dependent chaperone part of the 55LCC heterohexameric ATPase complex which is chromatin-associated and promotes replisome proteostasis to maintain replication fork progression and genome stability. Required for replication fork progression, sister chromatid cohesion, and chromosome stability. The ATPase activity is specifically enhanced by replication fork DNA and is coupled to cysteine protease-dependent cleavage of replisome substrates in response to replication fork damage. Uses ATPase activity to process replisome substrates in S-phase, facilitating their proteolytic turnover from chromatin to ensure DNA replication and mitotic fidelity. Plays an essential role in the cytoplasmic maturation steps of pre-60S ribosomal particles by promoting the release of shuttling protein RSL24D1/RLP24 from the pre-ribosomal particles. This is ATPase family gene 2 protein homolog B from Homo sapiens (Human).